A 200-amino-acid polypeptide reads, in one-letter code: Imidazoleglycerol-phosphate dehydratase (200 aa).

This sequence belongs to the imidazoleglycerol-phosphate dehydratase family.

The protein resides in the cytoplasm. The catalysed reaction is D-erythro-1-(imidazol-4-yl)glycerol 3-phosphate = 3-(imidazol-4-yl)-2-oxopropyl phosphate + H2O. The protein operates within amino-acid biosynthesis; L-histidine biosynthesis; L-histidine from 5-phospho-alpha-D-ribose 1-diphosphate: step 6/9. The protein is Imidazoleglycerol-phosphate dehydratase of Chlorobium phaeovibrioides (strain DSM 265 / 1930) (Prosthecochloris vibrioformis (strain DSM 265)).